The following is a 130-amino-acid chain: Small ribosomal subunit protein uS11 (130 aa).

This sequence belongs to the universal ribosomal protein uS11 family. Part of the 30S ribosomal subunit. Interacts with proteins S7 and S18. Binds to IF-3.

Functionally, located on the platform of the 30S subunit, it bridges several disparate RNA helices of the 16S rRNA. Forms part of the Shine-Dalgarno cleft in the 70S ribosome. In Buchnera aphidicola subsp. Schizaphis graminum (strain Sg), this protein is Small ribosomal subunit protein uS11.